Here is a 142-residue protein sequence, read N- to C-terminus: Large ribosomal subunit protein bL17 (142 aa).

The protein belongs to the bacterial ribosomal protein bL17 family. Part of the 50S ribosomal subunit. Contacts protein L32.

The protein is Large ribosomal subunit protein bL17 of Brucella canis (strain ATCC 23365 / NCTC 10854 / RM-666).